Here is a 242-residue protein sequence, read N- to C-terminus: Anthranilate phosphoribosyltransferase (242 aa).

5-phospho-alpha-D-ribose 1-diphosphate contacts are provided by residues glycine 79, 82 to 83 (GD), threonine 87, 89 to 92 (NVST), 107 to 115 (KHGNRAVSS), and serine 119. Residue glycine 79 participates in anthranilate binding. Serine 91 is a binding site for Mg(2+). An anthranilate-binding site is contributed by asparagine 110. Residue arginine 165 participates in anthranilate binding. Residues aspartate 224 and glutamate 225 each contribute to the Mg(2+) site.

The protein belongs to the anthranilate phosphoribosyltransferase family. As to quaternary structure, homodimer. Mg(2+) serves as cofactor.

It carries out the reaction N-(5-phospho-beta-D-ribosyl)anthranilate + diphosphate = 5-phospho-alpha-D-ribose 1-diphosphate + anthranilate. The protein operates within amino-acid biosynthesis; L-tryptophan biosynthesis; L-tryptophan from chorismate: step 2/5. In terms of biological role, catalyzes the transfer of the phosphoribosyl group of 5-phosphorylribose-1-pyrophosphate (PRPP) to anthranilate to yield N-(5'-phosphoribosyl)-anthranilate (PRA). In Bacillus caldotenax, this protein is Anthranilate phosphoribosyltransferase (trpD).